The following is a 116-amino-acid chain: Flagellar transcriptional regulator FlhD (116 aa).

This sequence belongs to the FlhD family. As to quaternary structure, homodimer; disulfide-linked. Forms a heterohexamer composed of two FlhC and four FlhD subunits. Each FlhC binds a FlhD dimer, forming a heterotrimer, and a hexamer assembles by dimerization of two heterotrimers.

The protein localises to the cytoplasm. Functions in complex with FlhC as a master transcriptional regulator that regulates transcription of several flagellar and non-flagellar operons by binding to their promoter region. Activates expression of class 2 flagellar genes, including fliA, which is a flagellum-specific sigma factor that turns on the class 3 genes. Also regulates genes whose products function in a variety of physiological pathways. This chain is Flagellar transcriptional regulator FlhD, found in Proteus mirabilis (strain HI4320).